Here is a 248-residue protein sequence, read N- to C-terminus: Pulmonary surfactant-associated protein A (248 aa).

The signal sequence occupies residues 1-20 (MLLCSLTLTLLWMVASGLEC). The region spanning 28–100 (GSPGIPGTPG…PGERGPPGFP (73 aa)) is the Collagen-like domain. Residues 29–102 (SPGIPGTPGS…ERGPPGFPAY (74 aa)) are disordered. Residues P30, P33, P36, P42, P54, P57, P63, P67, and P70 each carry the 4-hydroxyproline modification. Residues 42 to 51 (PGRDGRDGIK) show a composition bias toward basic and acidic residues. A compositionally biased stretch (pro residues) spans 54–65 (PGPPGPMGPPGG). Low complexity predominate over residues 69-82 (LPGRDGMTGAPGLP). The segment covering 84–93 (ERGEKGEPGE) has biased composition (basic and acidic residues). The C-type lectin domain maps to 132 to 248 (LAVGEKVFST…LQYRLAICEF (117 aa)). 2 cysteine pairs are disulfide-bonded: C155–C246 and C224–C238. An N-linked (GlcNAc...) asparagine glycan is attached at N207. Residues E215, R217, N234, and D235 each contribute to the Ca(2+) site.

The protein belongs to the SFTPA family. In terms of assembly, oligomeric complex of 6 set of homotrimers.

It localises to the secreted. The protein resides in the extracellular space. It is found in the extracellular matrix. Its subcellular location is the surface film. In terms of biological role, in presence of calcium ions, it binds to surfactant phospholipids and contributes to lower the surface tension at the air-liquid interface in the alveoli of the mammalian lung and is essential for normal respiration. Enhances the expression of MYO18A/SP-R210 on alveolar macrophages. In Bos taurus (Bovine), this protein is Pulmonary surfactant-associated protein A (SFTPA1).